Reading from the N-terminus, the 612-residue chain is MPEYRSKTSTHGRNMAGARALWRATGMKDGDFHKPIIAIANSFTQFVPGHVHLKDLGQLVAREIERVGGVAKEFDTIAVDDGIAMGHDGMLYSLPSREIIADSVEYMVNAHCADALVCISNCDKITPGMLMAALRLNIPTVFVSGGPMEAGKTKLADHNLDLIDAMVIAADDSASDEKVAEFERSACPTCGSCSGMFTANSMNCLTEALGLSLPGNGTVVATHADREQLFLRAGRVAVELCHRWYGGEDPTALPRGIATFEAFENAMTLDIAMGGSTNTILHLLAAAQEGEVPFGMRDIDRLSKRVPQLCKVAPNTPKYHIEDVHRAGGIMSILGELARGGLLHTNAATVHTRTLADAIAQWDVTQVDDDKVHTFYKAGPAGIPTQIAFSQATRWDTLDTDRSEGCIRDVAHAFSQEGGLAVLYGNIARDGCVVKTAGVDESIHVFEGNTRVYESQDSAVKGILADEVKAGDVVVIRYEGPKGGPGMQEMLYPTSYLKSKGLGKHCALLTDGRFSGGTSGLSIGHASPEAAAGGAIGLVRNGDKILIDIPKRSIDLLVSDEELAARRTEQDAKGWKPVEVRPRKVTTALKAYALLATSADKGAVRDKAMLDG.

Aspartate 81 is a binding site for Mg(2+). Cysteine 122 contributes to the [2Fe-2S] cluster binding site. Mg(2+)-binding residues include aspartate 123 and lysine 124. N6-carboxylysine is present on lysine 124. [2Fe-2S] cluster is bound at residue cysteine 193. Glutamate 489 contributes to the Mg(2+) binding site. Serine 515 serves as the catalytic Proton acceptor.

The protein belongs to the IlvD/Edd family. In terms of assembly, homodimer. It depends on [2Fe-2S] cluster as a cofactor. Mg(2+) is required as a cofactor.

It catalyses the reaction (2R)-2,3-dihydroxy-3-methylbutanoate = 3-methyl-2-oxobutanoate + H2O. The catalysed reaction is (2R,3R)-2,3-dihydroxy-3-methylpentanoate = (S)-3-methyl-2-oxopentanoate + H2O. The protein operates within amino-acid biosynthesis; L-isoleucine biosynthesis; L-isoleucine from 2-oxobutanoate: step 3/4. It functions in the pathway amino-acid biosynthesis; L-valine biosynthesis; L-valine from pyruvate: step 3/4. Functions in the biosynthesis of branched-chain amino acids. Catalyzes the dehydration of (2R,3R)-2,3-dihydroxy-3-methylpentanoate (2,3-dihydroxy-3-methylvalerate) into 2-oxo-3-methylpentanoate (2-oxo-3-methylvalerate) and of (2R)-2,3-dihydroxy-3-methylbutanoate (2,3-dihydroxyisovalerate) into 2-oxo-3-methylbutanoate (2-oxoisovalerate), the penultimate precursor to L-isoleucine and L-valine, respectively. The chain is Dihydroxy-acid dehydratase from Xanthomonas campestris pv. campestris (strain 8004).